Consider the following 307-residue polypeptide: Elongation factor Ts (307 aa).

The involved in Mg(2+) ion dislocation from EF-Tu stretch occupies residues 79 to 82 (TDFV).

This sequence belongs to the EF-Ts family.

The protein resides in the cytoplasm. Its function is as follows. Associates with the EF-Tu.GDP complex and induces the exchange of GDP to GTP. It remains bound to the aminoacyl-tRNA.EF-Tu.GTP complex up to the GTP hydrolysis stage on the ribosome. This is Elongation factor Ts from Bartonella bacilliformis (strain ATCC 35685 / KC583 / Herrer 020/F12,63).